Consider the following 96-residue polypeptide: Evasin P1100 (96 aa).

The signal sequence occupies residues 1 to 28 (MAFNVITFLQFSVFVVILFNINLHSASA). Cystine bridges form between Cys48/Cys67, Cys52/Cys69, and Cys63/Cys80. The N-linked (GlcNAc...) asparagine glycan is linked to Asn51. N-linked (GlcNAc...) asparagine glycosylation occurs at Asn74.

The protein localises to the secreted. In terms of biological role, salivary chemokine-binding protein which binds to host chemokines CXCL1, CXCL2, CXCL3, CXCL5, CXCL6, CXCL10, CXCL11 and CXCL13. The sequence is that of Evasin P1100 from Ixodes ricinus (Common tick).